The sequence spans 156 residues: Small ribosomal subunit protein uS7 (156 aa).

Belongs to the universal ribosomal protein uS7 family. Part of the 30S ribosomal subunit. Contacts proteins S9 and S11.

In terms of biological role, one of the primary rRNA binding proteins, it binds directly to 16S rRNA where it nucleates assembly of the head domain of the 30S subunit. Is located at the subunit interface close to the decoding center, probably blocks exit of the E-site tRNA. The protein is Small ribosomal subunit protein uS7 of Pasteurella multocida (strain Pm70).